A 50-amino-acid chain; its full sequence is Inducible serine protease inhibitor 1 (50 aa).

The disordered stretch occupies residues 1 to 27 (DLVXGTNFXKNNPXSTRVAANSXRSPS). Residues 8 to 25 (FXKNNPXSTRVAANSXRS) show a composition bias toward polar residues.

Inhibits trypsin and the toxin protease PR2 of M.anisopliae. Does not inhibit chymotrypsin, subtilisin Carlsberg, proteinase K, porcine pancreatic elastase and the toxin protease PR1 of M.anisopliae. This is Inducible serine protease inhibitor 1 from Galleria mellonella (Greater wax moth).